A 763-amino-acid polypeptide reads, in one-letter code: Phosphoglycerol transferase I (763 aa).

The next 4 membrane-spanning stretches (helical) occupy residues M1–A21, W26–F46, I77–I97, and F108–F128.

It belongs to the OpgB family.

It localises to the cell inner membrane. The enzyme catalyses a phosphatidylglycerol + a membrane-derived-oligosaccharide D-glucose = a 1,2-diacyl-sn-glycerol + a membrane-derived-oligosaccharide 6-(glycerophospho)-D-glucose.. It functions in the pathway glycan metabolism; osmoregulated periplasmic glucan (OPG) biosynthesis. Its function is as follows. Transfers a phosphoglycerol residue from phosphatidylglycerol to the membrane-bound nascent glucan backbones. This Escherichia coli O139:H28 (strain E24377A / ETEC) protein is Phosphoglycerol transferase I.